Consider the following 238-residue polypeptide: Probable transcriptional regulatory protein ABC1956 (238 aa).

This sequence belongs to the TACO1 family. YeeN subfamily.

It is found in the cytoplasm. The protein is Probable transcriptional regulatory protein ABC1956 of Shouchella clausii (strain KSM-K16) (Alkalihalobacillus clausii).